Consider the following 719-residue polypeptide: Fatty acid oxidation complex subunit alpha (719 aa).

The enoyl-CoA hydratase/isomerase stretch occupies residues 1 to 190 (MVYQGNRITV…KLGLVDATVA (190 aa)). Substrate is bound at residue D298. Residues 313-719 (HDINEAAVLG…AAGETFYATA (407 aa)) are 3-hydroxyacyl-CoA dehydrogenase. Residues M326, D345, 402–404 (VVE), K409, and S431 each bind NAD(+). The active-site For 3-hydroxyacyl-CoA dehydrogenase activity is the H452. N455 contributes to the NAD(+) binding site. N502 lines the substrate pocket.

It in the N-terminal section; belongs to the enoyl-CoA hydratase/isomerase family. This sequence in the C-terminal section; belongs to the 3-hydroxyacyl-CoA dehydrogenase family. In terms of assembly, heterotetramer of two alpha chains (FadB) and two beta chains (FadA).

The catalysed reaction is a (3S)-3-hydroxyacyl-CoA + NAD(+) = a 3-oxoacyl-CoA + NADH + H(+). It catalyses the reaction a (3S)-3-hydroxyacyl-CoA = a (2E)-enoyl-CoA + H2O. It carries out the reaction a 4-saturated-(3S)-3-hydroxyacyl-CoA = a (3E)-enoyl-CoA + H2O. The enzyme catalyses (3S)-3-hydroxybutanoyl-CoA = (3R)-3-hydroxybutanoyl-CoA. The catalysed reaction is a (3Z)-enoyl-CoA = a 4-saturated (2E)-enoyl-CoA. It catalyses the reaction a (3E)-enoyl-CoA = a 4-saturated (2E)-enoyl-CoA. It participates in lipid metabolism; fatty acid beta-oxidation. In terms of biological role, involved in the aerobic and anaerobic degradation of long-chain fatty acids via beta-oxidation cycle. Catalyzes the formation of 3-oxoacyl-CoA from enoyl-CoA via L-3-hydroxyacyl-CoA. It can also use D-3-hydroxyacyl-CoA and cis-3-enoyl-CoA as substrate. The chain is Fatty acid oxidation complex subunit alpha from Psychrobacter cryohalolentis (strain ATCC BAA-1226 / DSM 17306 / VKM B-2378 / K5).